The following is a 309-amino-acid chain: Transcription termination/antitermination protein NusG (309 aa).

Disordered stretches follow at residues 1-24 and 58-91; these read MSDP…ADDE and EGDH…VEAG. Residues 65–91 are compositionally biased toward acidic residues; the sequence is TDEDIEAGAVETDEDVETDTDEDVEAG.

It belongs to the NusG family.

Its function is as follows. Participates in transcription elongation, termination and antitermination. This chain is Transcription termination/antitermination protein NusG, found in Streptomyces galbus.